A 768-amino-acid polypeptide reads, in one-letter code: UPF0313 protein VV1_2212 (768 aa).

In terms of domain architecture, Radical SAM core spans A363–D640. [4Fe-4S] cluster is bound by residues C377, C381, and C384. Residues D674 to R768 form a disordered region. The segment covering A679–A689 has biased composition (basic residues). Polar residues predominate over residues G719 to S731.

This sequence belongs to the UPF0313 family. [4Fe-4S] cluster serves as cofactor.

This chain is UPF0313 protein VV1_2212, found in Vibrio vulnificus (strain CMCP6).